The following is a 103-amino-acid chain: ATP-dependent Clp protease adapter protein ClpS 1 (103 aa).

Belongs to the ClpS family. Binds to the N-terminal domain of the chaperone ClpA.

In terms of biological role, involved in the modulation of the specificity of the ClpAP-mediated ATP-dependent protein degradation. In Rhodopseudomonas palustris (strain ATCC BAA-98 / CGA009), this protein is ATP-dependent Clp protease adapter protein ClpS 1.